Consider the following 175-residue polypeptide: Trafficking protein particle complex subunit 20 (175 aa).

The protein belongs to the TRAPP small subunits family. Sedlin subfamily. In terms of assembly, part of the multisubunit TRAPP (transport protein particle) I complex composed of BET3, BET5, TRS20, TRS23, TRS31 and TRS33. Part of the multisubunit TRAPP (transport protein particle) II complex composed of BET3, BET5, TRS20, TRS23, TRS31, TRS33, TRS65, TRS85, TRS120 and TRS130. Part of the multisubunit TRAPP (transport protein particle) III complex composed of BET3, BET5, TRS20, TRS23, TRS31, TRS33 and TRS85.

The protein localises to the golgi apparatus. The protein resides in the cis-Golgi network. Its subcellular location is the endoplasmic reticulum. It localises to the preautophagosomal structure. Its function is as follows. Component of the TRAPP I, TRAPP II and TRAPP III complexes which act as guanine nucleotide exchange factors (GEF) for YPT1. TRAPP I plays a key role in the late stages of endoplasmic reticulum to Golgi traffic. TRAPP II plays a role in intra-Golgi transport. TRAPP III plays a role in autophagosome formation. The sequence is that of Trafficking protein particle complex subunit 20 (TRS20) from Saccharomyces cerevisiae (strain ATCC 204508 / S288c) (Baker's yeast).